The chain runs to 175 residues: ATP-dependent protease subunit HslV (175 aa).

T2 is a catalytic residue. Na(+) is bound by residues A156, C159, and T162.

It belongs to the peptidase T1B family. HslV subfamily. In terms of assembly, a double ring-shaped homohexamer of HslV is capped on each side by a ring-shaped HslU homohexamer. The assembly of the HslU/HslV complex is dependent on binding of ATP.

It is found in the cytoplasm. It carries out the reaction ATP-dependent cleavage of peptide bonds with broad specificity.. Its activity is regulated as follows. Allosterically activated by HslU binding. In terms of biological role, protease subunit of a proteasome-like degradation complex believed to be a general protein degrading machinery. This Rhizobium johnstonii (strain DSM 114642 / LMG 32736 / 3841) (Rhizobium leguminosarum bv. viciae) protein is ATP-dependent protease subunit HslV.